A 256-amino-acid polypeptide reads, in one-letter code: Protein FixA (256 aa).

This sequence belongs to the ETF beta-subunit/FixA family. In terms of assembly, heterodimer of FixA and FixB.

The protein operates within amine and polyamine metabolism; carnitine metabolism. Required for anaerobic carnitine reduction. May bring reductant to CaiA. This is Protein FixA from Escherichia fergusonii (strain ATCC 35469 / DSM 13698 / CCUG 18766 / IAM 14443 / JCM 21226 / LMG 7866 / NBRC 102419 / NCTC 12128 / CDC 0568-73).